Consider the following 748-residue polypeptide: MSNPGGRRNGPVKLRLTVLCAKNLVKKDFFRLPDPFAKVVVDGSGQCHSTDTVKNTLDPKWNQHYDLYIGKSDSVTISVWNHKKIHKKQGAGFLGCVRLLSNAINRLKDTGYQRLDLCKLGPNDNDTVRGQIVVSLQSRDRIGTGGQVVDCSRLFDNDLPDGWEERRTASGRIQYLNHITRTTQWERPTRPASEYSSPGRPLSCFVDENTPITGTNGATCGHSSDPRLAERRVRSQRHRNYMSRTHLHTPPDLPEGYEQRTTQQGQVYFLHTQTGVSTWHDPRVPRDLSNINCEELGPLPPGWEIRNTATGRVYFVDHNNRTTQFTDPRLSANLHLVLNRQNQLKDQQQQQVVPLCPDDTECLTVPRYKRDLVQKLKILRQELSQQQPQAGHCRIEVSREEIFEESYRQVMKMRPKDLWKRLMIKFRGEEGLDYGGVAREWLYLLSHEMLNPYYGLFQYSRDDIYTLQINPDSAVNPEHLSYFHFVGRIMGMAVFHGHYIDGGFTLPFYKQLLGKSITLDDMELVDPDLHNSLVWILENDITGVLDHTFCVEHNAYGEIIQHELKPNGKSIPVTEENKKEYVRLYVNWRFLRGIEAQFLALQKGFNEVIPQHLLKTFDEKELELIICGLGKIDVSDWKVNTRLKHCTPDSNVVKWFWKAVEFFDEERRARLLQFVTGSSRVPLQGFKALQGAAGPRLFTIHQIDACTNNLPKAHTCFNRIDIPPYESYEKLYEKLLTAIEETCGFAVE.

Residues 1–119 enclose the C2 domain; it reads MSNPGGRRNG…TGYQRLDLCK (119 aa). A Glycyl lysine isopeptide (Lys-Gly) (interchain with G-Cter in ubiquitin) cross-link involves residue K119. WW domains follow at residues 157-190, 251-284, and 297-330; these read NDLP…RPTR, PDLP…DPRV, and GPLP…DPRL. The 335-residue stretch at 414 to 748 folds into the HECT domain; it reads RPKDLWKRLM…IEETCGFAVE (335 aa). C716 (glycyl thioester intermediate) is an active-site residue.

In terms of assembly, interacts (via WW domains) with SMAD1. Interacts (via WW domains) with SMAD2 (via PY-motif). Interacts (via WW domains) with SMAD3 (via PY-motif). Interacts with SMAD6. Interacts with SMAD7 (via PY-motif) and TGFBR1; SMAD7 recruits SMURF2 to the TGF-beta receptor and regulates its degradation. Does not interact with SMAD4; SMAD4 lacks a PY-motif. Interacts with AIMP1. Interacts with NDFIP1 and NDFIP2; this interaction activates the E3 ubiquitin-protein ligase. Interacts with TTC3. Post-translationally, auto-ubiquitinated and ubiquitinated in the presence of RNF11 and UBE2D1. Ubiquitinated by the SCF(FBXL15) complex and TTC3, leading to its degradation by the proteasome. 'Lys-48'-linked polyubiquitination mediated by TRAF4 at Lys-119 leads to SMURF2 proteasomal degradation.

The protein localises to the nucleus. Its subcellular location is the cytoplasm. The protein resides in the cell membrane. It is found in the membrane raft. The catalysed reaction is S-ubiquitinyl-[E2 ubiquitin-conjugating enzyme]-L-cysteine + [acceptor protein]-L-lysine = [E2 ubiquitin-conjugating enzyme]-L-cysteine + N(6)-ubiquitinyl-[acceptor protein]-L-lysine.. The protein operates within protein modification; protein ubiquitination. Activated by NDFIP1- and NDFIP2-binding. In terms of biological role, E3 ubiquitin-protein ligase which accepts ubiquitin from an E2 ubiquitin-conjugating enzyme in the form of a thioester and then directly transfers the ubiquitin to targeted substrates. Interacts with SMAD7 to trigger SMAD7-mediated transforming growth factor beta/TGF-beta receptor ubiquitin-dependent degradation, thereby down-regulating TGF-beta signaling. In addition, interaction with SMAD7 activates autocatalytic degradation, which is prevented by interaction with AIMP1. Also forms a stable complex with TGF-beta receptor-mediated phosphorylated SMAD1, SMAD2 and SMAD3, and targets SMAD1 and SMAD2 for ubiquitination and proteasome-mediated degradation. SMAD2 may recruit substrates, such as SNON, for ubiquitin-dependent degradation. Negatively regulates TGFB1-induced epithelial-mesenchymal transition and myofibroblast differentiation. This Mus musculus (Mouse) protein is E3 ubiquitin-protein ligase SMURF2.